A 503-amino-acid polypeptide reads, in one-letter code: 2-(3-amino-3-carboxypropyl)histidine synthase subunit 2 (503 aa).

Residues C93, C114, and C334 each contribute to the [4Fe-4S] cluster site. Residues 464-503 (GLDSVDEGEGPSKLYEGQSGIAKGYVGEGSKEKIQRDFGK) form a disordered region. Over residues 492-503 (GSKEKIQRDFGK) the composition is skewed to basic and acidic residues.

This sequence belongs to the DPH1/DPH2 family. DPH2 subfamily. As to quaternary structure, component of the 2-(3-amino-3-carboxypropyl)histidine synthase complex composed of dph1, dph2, dph3 and a NADH-dependent reductase, predominantly cbr1. [4Fe-4S] cluster serves as cofactor.

The protein resides in the cytoplasm. The protein operates within protein modification; peptidyl-diphthamide biosynthesis. Its function is as follows. Required for the first step of diphthamide biosynthesis, a post-translational modification of histidine which occurs in elongation factor 2. Dph1 and dph2 transfer a 3-amino-3-carboxypropyl (ACP) group from S-adenosyl-L-methionine (SAM) to a histidine residue, the reaction is assisted by a reduction system comprising dph3 and a NADH-dependent reductase, predominantly cbr1. Facilitates the reduction of the catalytic iron-sulfur cluster found in the dph1 subunit. The sequence is that of 2-(3-amino-3-carboxypropyl)histidine synthase subunit 2 from Schizosaccharomyces pombe (strain 972 / ATCC 24843) (Fission yeast).